The sequence spans 1485 residues: Chromosome partition protein MukB (1485 aa).

Position 34 to 41 (34 to 41 (GGNGAGKS)) interacts with ATP. Coiled coils occupy residues 337-480 (LNLV…QAYQ) and 509-605 (QHLA…PVWL). The tract at residues 666–783 (PSGAEDARLI…EVPLFGRAAR (118 aa)) is flexible hinge. 2 coiled-coil regions span residues 835–915 (EAEI…IQQH) and 977–1116 (GMLT…AKAG).

This sequence belongs to the SMC family. MukB subfamily. In terms of assembly, homodimerization via its hinge domain. Binds to DNA via its C-terminal region. Interacts, and probably forms a ternary complex, with MukE and MukF via its C-terminal region. The complex formation is stimulated by calcium or magnesium. Interacts with tubulin-related protein FtsZ.

Its subcellular location is the cytoplasm. It is found in the nucleoid. Functionally, plays a central role in chromosome condensation, segregation and cell cycle progression. Functions as a homodimer, which is essential for chromosome partition. Involved in negative DNA supercoiling in vivo, and by this means organize and compact chromosomes. May achieve or facilitate chromosome segregation by condensation DNA from both sides of a centrally located replisome during cell division. In Yersinia pseudotuberculosis serotype IB (strain PB1/+), this protein is Chromosome partition protein MukB.